The primary structure comprises 445 residues: Exodeoxyribonuclease 7 large subunit (445 aa).

This sequence belongs to the XseA family. As to quaternary structure, heterooligomer composed of large and small subunits.

The protein localises to the cytoplasm. The catalysed reaction is Exonucleolytic cleavage in either 5'- to 3'- or 3'- to 5'-direction to yield nucleoside 5'-phosphates.. Bidirectionally degrades single-stranded DNA into large acid-insoluble oligonucleotides, which are then degraded further into small acid-soluble oligonucleotides. This chain is Exodeoxyribonuclease 7 large subunit, found in Staphylococcus saprophyticus subsp. saprophyticus (strain ATCC 15305 / DSM 20229 / NCIMB 8711 / NCTC 7292 / S-41).